Here is a 1311-residue protein sequence, read N- to C-terminus: Nephrocystin-3 (1311 aa).

Positions 81 to 183 (SKNNEIASMQ…LQRLQAQGIQ (103 aa)) form a coiled coil. 9 TPR repeats span residues 889–923 (LSYWQLVGKDKISMASEYFDALKQYERSCEGEEKM), 927–960 (ADLYETLGRFLKDLGLLSQAVTPLQRSLEIRETA), 969–1002 (AQSLHQLAGVYVQSKKFGNAEQLYKQALEISENA), 1011–1044 (ARELDALAVLYQKQNKFEQAEQLRKKSLKIRQKS), 1077–1110 (ARTLNELGVLYYLQNNLETAETFLKRSLEMRERV), 1119–1152 (AQSINNLAALYNEKKQYDKAEELYERALDIRRRA), 1161–1194 (AYTVKHLAVLYKRKGKLDKAVPLYELAVEIRQKS), 1203–1236 (ATALVNLAVLYCQMKKQAEASPLYERAMKIYEDS), and 1245–1278 (GETLKNLAVLRYEEGDFEKAAELYKRAMEIKETE).

It localises to the cell projection. It is found in the cilium. In terms of biological role, required for normal ciliary development and function. Inhibits disheveled-1-induced canonical Wnt-signaling activity and may also play a role in the control of non-canonical Wnt signaling that regulates planar cell polarity. Probably acts as a molecular switch between different Wnt signaling pathways. Required for proper convergent extension cell movements. The polypeptide is Nephrocystin-3 (nphp3) (Xenopus tropicalis (Western clawed frog)).